Here is a 280-residue protein sequence, read N- to C-terminus: Meiotic driver wtf35 (280 aa).

A compositionally biased stretch (basic and acidic residues) spans 1-29; that stretch reads MKNKDYPLRTSMDELSTKNDNEIDLEKGP. Disordered regions lie at residues 1–49 and 64–100; these read MKNK…DLNN and NKST…GTTD. Transmembrane regions (helical) follow at residues 105–125, 142–162, 184–204, and 218–238; these read FLIK…PAVC, WTLI…SWYF, IPMA…PRVA, and SLAD…VETV.

The protein belongs to the WTF family. As to quaternary structure, homomer. Forms protein aggregates. The two isoforms can interact with each other and with themselves. High sequence similarity is required for their interaction.

The protein resides in the spore membrane. Its subcellular location is the vacuole membrane. It is found in the ascus epiplasm. It localises to the cytoplasm. The protein localises to the endoplasmic reticulum membrane. Promotes unequal transmission of alleles from the parental zygote to progeny spores by acting as poison/antidote system where the poison and antidote proteins are produced from the same locus; the poison component is trans-acting and targets all spores within an ascus whereas the antidote component is spore-specific, leading to poisoning of all progeny that do not inherit the allele. Its function is as follows. Localizes isoform 2 to the vacuole thereby facilitating its degradation. Functionally, forms toxic aggregates that disrupt spore maturation. The polypeptide is Meiotic driver wtf35 (Schizosaccharomyces pombe (Fission yeast)).